Here is a 593-residue protein sequence, read N- to C-terminus: Kelch-like protein 2 (593 aa).

The segment at 1-29 is disordered; sequence MESPPLPPACTKQGHQKPLDSKDENPEKH. Residues 17–29 show a composition bias toward basic and acidic residues; it reads KPLDSKDENPEKH. A BTB domain is found at 56 to 123; the sequence is CDVTIVAEDM…VYTAEIQVTE (68 aa). 6 Kelch repeats span residues 308-353, 354-400, 402-447, 449-496, 497-543, and 545-591; these read LMVV…YMAG, LVFA…VLNG, LYAV…VVGG, LYAV…VLNN, LLYA…AVNG, and LYVV…VIDK.

Component of the BCR(KLHL2) E3 ubiquitin ligase complex, at least composed of CUL3 and KLHL2 and RBX1. Binds actin. Interacts with KLHL12. Interacts (via N-terminus) with FYN (via SH3 domain). In terms of tissue distribution, detected in brain neurons, oligodendrocytes and astrocytes (at protein level).

Its subcellular location is the cytoplasm. The protein localises to the cytoskeleton. It localises to the cell projection. It is found in the ruffle. The protein resides in the lamellipodium. Its subcellular location is the cytosol. It participates in protein modification; protein ubiquitination. Substrate-specific adapter of a BCR (BTB-CUL3-RBX1) E3 ubiquitin ligase complex that mediates the ubiquitination of target proteins, such as NPTXR, WNK1, WNK3 and WNK4, leading most often to their proteasomal degradation. The BCR(KLHL2) complex catalyzes ubiquitination and degradation of NPTXR. Responsible for degradative ubiquitination of the WNK kinases WNK1, WNK3 and WNK4. Plays a role in the reorganization of the actin cytoskeleton. Promotes growth of cell projections in oligodendrocyte precursors. This is Kelch-like protein 2 from Rattus norvegicus (Rat).